The chain runs to 228 residues: Translin (228 aa).

Positions 86-90 (RFHEH) are DNA/RNA binding. The segment at 177 to 198 (LDSGFRLLNLKNDSLRKRYDGL) is leucine-zipper. K187 is subject to N6-acetyllysine. S190 bears the Phosphoserine mark. The residue at position 199 (K199) is an N6-acetyllysine.

This sequence belongs to the translin family. As to quaternary structure, ring-shaped heterooctamer of six TSN and two TSNAX subunits, DNA/RNA binding occurs inside the ring.

The protein localises to the cytoplasm. Its subcellular location is the nucleus. DNA-binding protein that specifically recognizes consensus sequences at the breakpoint junctions in chromosomal translocations, mostly involving immunoglobulin (Ig)/T-cell receptor gene segments. Seems to recognize single-stranded DNA ends generated by staggered breaks occurring at recombination hot spots. In terms of biological role, exhibits both single-stranded and double-stranded endoribonuclease activity. May act as an activator of RNA-induced silencing complex (RISC) by facilitating endonucleolytic cleavage of the siRNA passenger strand. In Pongo abelii (Sumatran orangutan), this protein is Translin (TSN).